The sequence spans 242 residues: MAQEIQKENNDHLVQSSDPEHPANLIPDLCRRFYNWGWVTGTGGGTSIRRDNHIFIAPSGVQKEMMKSDNIFVLEFPTPKYPPSDRKYIRKPLDLKPSACTPLFLAAFERGAGCCIHTHSQWAVLVTLLVEREKGPNAYFEISNIEQIKGIPRGKGKGMMGFYDTLRIPIIDNTAFEEDLTGSLEKAMEEYPDTYAVLVRRHGIYVWGDDVVKAKTQCESLDYLFQLAVEMHKLGLPWVKET.

Residues 1-11 (MAQEIQKENND) show a composition bias toward basic and acidic residues. Residues 1 to 20 (MAQEIQKENNDHLVQSSDPE) are disordered. Residue C100 coordinates substrate. Positions 117 and 119 each coordinate Zn(2+). The active-site Proton donor/acceptor is E146. H202 provides a ligand contact to Zn(2+).

Belongs to the aldolase class II family. MtnB subfamily. Zn(2+) is required as a cofactor.

The protein resides in the cytoplasm. The enzyme catalyses 5-(methylsulfanyl)-D-ribulose 1-phosphate = 5-methylsulfanyl-2,3-dioxopentyl phosphate + H2O. It functions in the pathway amino-acid biosynthesis; L-methionine biosynthesis via salvage pathway; L-methionine from S-methyl-5-thio-alpha-D-ribose 1-phosphate: step 2/6. In terms of biological role, catalyzes the dehydration of methylthioribulose-1-phosphate (MTRu-1-P) into 2,3-diketo-5-methylthiopentyl-1-phosphate (DK-MTP-1-P). The protein is Methylthioribulose-1-phosphate dehydratase of Aspergillus niger (strain ATCC MYA-4892 / CBS 513.88 / FGSC A1513).